A 492-amino-acid chain; its full sequence is Tyrosinase-like protein 1 (492 aa).

The N-terminal stretch at 1 to 22 (MDKMRTLQSLIVKLTLLYGALC) is a signal peptide. Residues histidine 147, histidine 155, histidine 164, histidine 289, histidine 293, and histidine 316 each contribute to the Cu cation site. Residues 472-492 (SEPPLQLEGPSFTSSFDDPRI) form a disordered region. The span at 482-492 (SFTSSFDDPRI) shows a compositional bias: polar residues.

Cu(2+) serves as cofactor. As to expression, prismatic layer of shell (at protein level). Expressed primarily in the mantle with highest level in the mantle edge and lower level in the mantle pallium.

The protein localises to the secreted. This is Tyrosinase-like protein 1 from Margaritifera margaritifera (Freshwater pearl mussel).